The following is a 185-amino-acid chain: Photosystem I assembly protein Ycf4 (185 aa).

The next 2 helical transmembrane spans lie at 24–44 and 66–86; these read YLIG…SISS and IIMG…WYLV.

The protein belongs to the Ycf4 family.

It is found in the cellular thylakoid membrane. In terms of biological role, seems to be required for the assembly of the photosystem I complex. The chain is Photosystem I assembly protein Ycf4 from Prochlorococcus marinus (strain MIT 9515).